We begin with the raw amino-acid sequence, 214 residues long: Octanoyltransferase (214 aa).

Residues 32–207 (EDTLDEIWLV…NLLALLNHPP (176 aa)) form the BPL/LPL catalytic domain. Residues 71–78 (RGGQVTYH), 138–140 (SLG), and 151–153 (GLA) contribute to the substrate site. The active-site Acyl-thioester intermediate is cysteine 169.

It belongs to the LipB family.

It localises to the cytoplasm. The catalysed reaction is octanoyl-[ACP] + L-lysyl-[protein] = N(6)-octanoyl-L-lysyl-[protein] + holo-[ACP] + H(+). It participates in protein modification; protein lipoylation via endogenous pathway; protein N(6)-(lipoyl)lysine from octanoyl-[acyl-carrier-protein]: step 1/2. In terms of biological role, catalyzes the transfer of endogenously produced octanoic acid from octanoyl-acyl-carrier-protein onto the lipoyl domains of lipoate-dependent enzymes. Lipoyl-ACP can also act as a substrate although octanoyl-ACP is likely to be the physiological substrate. In Klebsiella pneumoniae (strain 342), this protein is Octanoyltransferase.